The following is a 189-amino-acid chain: Peptidyl-tRNA hydrolase (189 aa).

Tyr-16 serves as a coordination point for tRNA. His-21 (proton acceptor) is an active-site residue. Residues Phe-67, Asn-69, and Asn-115 each coordinate tRNA.

This sequence belongs to the PTH family. Monomer.

Its subcellular location is the cytoplasm. The enzyme catalyses an N-acyl-L-alpha-aminoacyl-tRNA + H2O = an N-acyl-L-amino acid + a tRNA + H(+). Its function is as follows. Hydrolyzes ribosome-free peptidyl-tRNAs (with 1 or more amino acids incorporated), which drop off the ribosome during protein synthesis, or as a result of ribosome stalling. Functionally, catalyzes the release of premature peptidyl moieties from peptidyl-tRNA molecules trapped in stalled 50S ribosomal subunits, and thus maintains levels of free tRNAs and 50S ribosomes. In Legionella pneumophila subsp. pneumophila (strain Philadelphia 1 / ATCC 33152 / DSM 7513), this protein is Peptidyl-tRNA hydrolase.